The primary structure comprises 628 residues: DNA mismatch repair protein MutL (628 aa).

The disordered stretch occupies residues 334 to 367; the sequence is SDFAQPSADNMPKPESPGAPAAHGRKDDAPAAHA. Residues 357 to 367 are compositionally biased toward basic and acidic residues; that stretch reads GRKDDAPAAHA.

It belongs to the DNA mismatch repair MutL/HexB family.

Functionally, this protein is involved in the repair of mismatches in DNA. It is required for dam-dependent methyl-directed DNA mismatch repair. May act as a 'molecular matchmaker', a protein that promotes the formation of a stable complex between two or more DNA-binding proteins in an ATP-dependent manner without itself being part of a final effector complex. The protein is DNA mismatch repair protein MutL of Opitutus terrae (strain DSM 11246 / JCM 15787 / PB90-1).